Reading from the N-terminus, the 7094-residue chain is Replicase polyprotein 1ab (7094 aa).

In terms of domain architecture, CoV Nsp1 globular spans 54-196 (PENHVMVDCR…PWVMYLRKCG (143 aa)). A BetaCoV Nsp1 C-terminal domain is found at 216–246 (FKVEDAYDLVHDEPKGKFSKKAYALIRGYRG). In terms of domain architecture, CoV Nsp2 N-terminal spans 250–519 (LLYVDQYGCD…LICKALYLDY (270 aa)). Positions 392, 397, 413, and 416 each coordinate Zn(2+). The interval 392–416 (CEQDLCDFKGWVPGNMIDGFACTTC) is C4. The CoV Nsp2 middle domain occupies 524 to 713 (CGNLHQRELL…AQAFRSVAKV (190 aa)). The CoV Nsp2 C-terminal domain maps to 733 to 851 (RRRICLSGSK…LDQAWRVPCA (119 aa)). Residues 853–966 (RRVTFKEQPT…LYCAFTAPED (114 aa)) form the Ubiquitin-like 1 domain. The region spanning 1036–1274 (DLESVIQDYE…IAQLYGSCIT (239 aa)) is the Peptidase C16 1 domain. Cys-1074 (for PL1-PRO activity) is an active-site residue. Zn(2+) contacts are provided by Cys-1151, Cys-1154, Cys-1177, and Cys-1179. A C4-type 1 zinc finger spans residues 1151–1179 (CIKCDLALKLKGLDAMFFYGDVVSHVCKC). Residues His-1225 and Asp-1236 each act as for PL1-PRO activity in the active site. Residues 1275–1435 (PNVCFVKGDI…LISKCQITAV (161 aa)) form the Macro domain. Residues 1491–1563 (DDARTFVQSN…VAQIKALFLD (73 aa)) enclose the DPUP domain. The Ubiquitin-like 2 domain occupies 1562–1617 (LDKVDILLTVDGVNFTNRFVPVGESFGKSLGNVFCDGVNVTKHKCDINYKGKVFFQ). Residues 1631 to 1892 (SSFNFDQKEL…KIEYNPDLSQ (262 aa)) form the Peptidase C16 2 domain. The For PL2-PRO activity role is filled by Cys-1671. Zn(2+) is bound by residues Cys-1749, Cys-1751, Cys-1783, and Cys-1785. Residues 1749 to 1785 (CKCGVKQEQRTGVDAVMHFGTLSREDLEIGYTVDCSC) form a C4-type 2 zinc finger. Residues His-1828 and Asp-1842 each act as for PL2-PRO activity in the active site. The Nucleic acid-binding domain occupies 1906 to 2007 (IKAQFKTFEK…TYFNRPLLVD (102 aa)). Residues 2020–2169 (DDGGDISESD…ADNKVIYTTE (150 aa)) form the G2M domain. Transmembrane regions (helical) follow at residues 2138-2158 (ISAC…WIKI), 2199-2219 (ACII…NVIF), and 2227-2247 (IGFL…TFSL). The tract at residues 2138–2385 (ISACFNFIKW…ASFIKLFILF (248 aa)) is HD1. The 3Ecto domain maps to 2235 to 2296 (GKIAQWIKST…AIDVVQYEAD (62 aa)). Cystine bridges form between Cys-2251–Cys-2275 and Cys-2266–Cys-2272. Transmembrane regions (helical) follow at residues 2313–2333 (LIVS…LISI), 2343–2363 (LFML…ANML), and 2365–2385 (AHVF…FILF). Positions 2383–2473 (ILFRHVAYGC…ELKRPIQPTD (91 aa)) are Y1. The 368-residue stretch at 2383–2750 (ILFRHVAYGC…LTTPFSLKGG (368 aa)) folds into the CoV Nsp3 Y domain. The Zn(2+) site is built by His-2387, Cys-2392, Cys-2397, Cys-2400, Cys-2433, His-2436, Cys-2440, and Cys-2443. The ZF1 stretch occupies residues 2387–2400 (HVAYGCSKPGCLFC). The interval 2433–2443 (CSKHQWNCIDC) is ZF2. The segment at 2474 to 2566 (VAYHTVTDVK…MVDKNLITTA (93 aa)) is Y2. The coV-Y stretch occupies residues 2474-2750 (VAYHTVTDVK…LTTPFSLKGG (277 aa)). Residues 2567 to 2649 (NTGTSVTETM…DSVMSAVSAG (83 aa)) are Y3. Positions 2650–2750 (LELTDESCNN…LTTPFSLKGG (101 aa)) are Y4. 7 helical membrane-spanning segments follow: residues 2752–2772 (VFSY…IGLW), 2824–2844 (STFG…VAVV), 3009–3029 (VFDL…FLAL), 3031–3051 (ASSI…YYLI), 3063–3083 (IVFV…VFQV), 3090–3110 (VYAI…SVIM), and 3115–3135 (LVMY…SVVV). Residues 2752 to 3135 (VFSYFVYVCF…FCLLYISVVV (384 aa)) form an HD2 region. One can recognise a Nsp4C domain in the interval 3149–3246 (LGTSVRSDGT…TASVSTSFLQ (98 aa)). The Peptidase C30 domain occupies 3247–3549 (SGIVKMVNPT…YQQLAGIKLQ (303 aa)). Active-site for 3CL-PRO activity residues include His-3287 and Cys-3391. 7 helical membrane-spanning segments follow: residues 3558-3578 (GIVC…TAFV), 3588-3608 (TNML…MLLV), 3614-3634 (YLTM…YLVV), 3657-3677 (TYTD…FVTL), 3684-3704 (LFSF…WYMG), 3711-3731 (ILLM…LSMA), and 3755-3775 (IVLV…GLFS). Positions 3558 to 3775 (GIVCWIMAST…IISCYWGLFS (218 aa)) are HD3. Residues 3837–3925 (SKLTDVKCAN…DYAKDNTVLQ (89 aa)) form the RdRp Nsp7 cofactor domain. One can recognise a RdRp Nsp8 cofactor domain in the interval 3926-4122 (ALQSEFVNMA…HNEVSATVLQ (197 aa)). The Nsp9 ssRNA-binding domain occupies 4123–4232 (NNELMPAKLK…GTISSTVRLQ (110 aa)). The ExoN/MTase coactivator domain maps to 4233–4370 (AGTATEYASN…CVSTDTTVQS (138 aa)). Zn(2+)-binding residues include Cys-4306, Cys-4309, His-4315, Cys-4322, Cys-4348, Cys-4351, Cys-4359, and Cys-4361. 2 zinc fingers span residues 4306–4322 (CIYC…DGLC) and 4348–4361 (CQVC…SCSC). The NiRAN domain occupies 4375-4630 (FLNRVRGTSV…DCELYVNNAY (256 aa)). The Mn(2+) site is built by Asn-4578 and Asp-4587. The region spanning 4631-4729 (RLFDLVQYDF…MNMDVDTHRY (99 aa)) is the Nsp12 Interface domain. Positions 4660, 4666, 4671, 4675, and 4852 each coordinate Zn(2+). The Nsp12 RNA-dependent RNA polymerase domain maps to 4730-5297 (RLSLKDLLLY…NMYLRSAVMQ (568 aa)). A rdRp Fingers N-ter region spans residues 4732 to 4946 (SLKDLLLYAA…HQKCLKSIAA (215 aa)). A rdRp Palm N-ter region spans residues 4947–4985 (TRGVPVVIGTTKFYGGWDDMLRRLIKDVDNPVLMGWDYP). A RdRp catalytic domain is found at 4977–5139 (PVLMGWDYPK…CYNSDYASKG (163 aa)). The interval 4986–5044 (KCDRAMPNILRIVSSLVLARKHEACCSQSDRFYRLANECAQVLSEIVMCGGCYYVKPGG) is rdRp Fingers C-ter. Zn(2+) is bound by residues His-5007, Cys-5010, and Cys-5011. A rdRp Palm C-ter region spans residues 5045 to 5180 (TSSGDATTAF…NNGPHEFCSQ (136 aa)). Active-site residues include Ser-5124, Asp-5125, and Asp-5126. Residues 5181–5297 (HTMLVKMDGD…NMYLRSAVMQ (117 aa)) form a rdRp Thumb region. The CV ZBD domain occupies 5298–5410 (SVGACVVCSS…DDFNRIASCK (113 aa)). Cys-5302, Cys-5305, Cys-5313, Cys-5316, Cys-5323, Cys-5326, His-5330, His-5336, Cys-5347, Cys-5352, Cys-5369, and His-5372 together coordinate Zn(2+). Positions 5553 to 5734 (SVLETFQNNV…MCCLGPDIFL (182 aa)) constitute a (+)RNA virus helicase ATP-binding domain. Residue 5578–5585 (GPPGTGKS) coordinates ATP. In terms of domain architecture, (+)RNA virus helicase C-terminal spans 5735–5904 (GTCYRCPKEI…VETRVQCSTN (170 aa)). Residues 5971–6186 (LFITKEEAVK…RCLAVYDCFC (216 aa)) enclose the ExoN domain. Residues Asp-5989, Glu-5991, and Glu-6090 contribute to the active site. Cys-6106, Cys-6109, Cys-6125, His-6128, His-6156, Cys-6160, and His-6163 together coordinate Zn(2+). Residues His-6167 and Asp-6172 contribute to the active site. Cys-6178 contacts Zn(2+). The region spanning 6195-6421 (YPIISNELSI…NLWNTFTKLQ (227 aa)) is the N7-MTase domain. Position 6230-6236 (6230-6236 (DIGNPKA)) interacts with S-adenosyl-L-methionine. The segment at 6308-6322 (CNGGSLYVNKHAFHT) is gpppA-binding. Cys-6346, Cys-6367, Cys-6378, and His-6381 together coordinate Zn(2+). A Nsp15 N-terminal oligomerization domain is found at 6422–6482 (SLENVVYNLV…NVAVELFAKR (61 aa)). The region spanning 6483 to 6603 (SIRHHPELKL…FAVRKEGQDV (121 aa)) is the AV-Nsp11N/CoV-Nsp15M domain. Residues 6653-6792 (TCRTDMEKDF…NDEKVMTFYP (140 aa)) enclose the NendoU domain. Active-site residues include His-6683, His-6698, Lys-6738, Lys-6841, Asp-6925, Lys-6965, and Glu-6998. The Nidovirus-type SAM-dependent 2'-O-MTase domain occupies 6797–7091 (ASDWKPGYSM…KEVFVGDSLV (295 aa)).

This sequence belongs to the coronaviruses polyprotein 1ab family. Interacts with host PHB and PHB2. As to quaternary structure, interacts with papain-like protease nsp3 and non-structural protein 6. In terms of assembly, monomer. Homodimer. Only the homodimer shows catalytic activity. Interacts with nsp8 and nsp12 to form the replication-transcription complex (RTC): nsp12, nsp7, two subunits of nsp8, and up to two subunits of nsp13. As to quaternary structure, interacts with nsp7, nsp13 and nsp12 to form the replication-transcription complex (RTC): nsp12, nsp7, two subunits of nsp8, and up to two subunits of nsp13. In terms of assembly, interacts with nsp12. Interacts with proofreading exoribonuclease nsp14 and 2'-O-methyltransferase nsp16; these interactions enhance nsp14 and nsp16 enzymatic activities. As to quaternary structure, interacts with nsp7 and nsp8 to form the replication-transcription complex (RTC): nsp12, nsp7, two subunits of nsp8, and up to two subunits of nsp13. Interacts with nsp9. In terms of assembly, interacts with nsp8 to form the replication-transcription complex (RTC): nsp12, nsp7, two subunits of nsp8, and up to two subunits of nsp13. It depends on Mn(2+) as a cofactor. The cofactor is Mg(2+). Post-translationally, specific enzymatic cleavages in vivo by its own proteases yield mature proteins. 3CL-PRO and PL-PRO proteinases are autocatalytically processed.

Its subcellular location is the host membrane. The protein localises to the host cytoplasm. The protein resides in the host perinuclear region. It localises to the host endoplasmic reticulum-Golgi intermediate compartment. The catalysed reaction is RNA(n) + a ribonucleoside 5'-triphosphate = RNA(n+1) + diphosphate. The enzyme catalyses ATP + H2O = ADP + phosphate + H(+). It catalyses the reaction Thiol-dependent hydrolysis of ester, thioester, amide, peptide and isopeptide bonds formed by the C-terminal Gly of ubiquitin (a 76-residue protein attached to proteins as an intracellular targeting signal).. It carries out the reaction a 5'-end (N(7)-methyl 5'-triphosphoguanosine)-ribonucleoside in mRNA + S-adenosyl-L-methionine = a 5'-end (N(7)-methyl 5'-triphosphoguanosine)-(2'-O-methyl-ribonucleoside) in mRNA + S-adenosyl-L-homocysteine + H(+). The catalysed reaction is uridylyl-uridylyl-ribonucleotide-RNA = a 3'-end uridylyl-2',3'-cyclophospho-uridine-RNA + a 5'-end dephospho-ribonucleoside-RNA. The enzyme catalyses a 5'-end diphospho-ribonucleoside in mRNA + GTP + H(+) = a 5'-end (5'-triphosphoguanosine)-ribonucleoside in mRNA + diphosphate. It catalyses the reaction a 5'-end (5'-triphosphoguanosine)-ribonucleoside in mRNA + S-adenosyl-L-methionine = a 5'-end (N(7)-methyl 5'-triphosphoguanosine)-ribonucleoside in mRNA + S-adenosyl-L-homocysteine. In terms of biological role, the replicase polyprotein of coronaviruses is a multifunctional protein: it contains the activities necessary for the transcription of negative stranded RNA, leader RNA, subgenomic mRNAs and progeny virion RNA as well as proteinases responsible for the cleavage of the polyprotein into functional products. Functionally, inhibits host translation by interacting with the 40S ribosomal subunit. The nsp1-40S ribosome complex further induces an endonucleolytic cleavage near the 5'UTR of host mRNAs, targeting them for degradation. Viral mRNAs are not susceptible to nsp1-mediated endonucleolytic RNA cleavage thanks to the presence of a 5'-end leader sequence and are therefore protected from degradation. By suppressing host gene expression, nsp1 facilitates efficient viral gene expression in infected cells and evasion from host immune response. Its function is as follows. May play a role in the modulation of host cell survival signaling pathway by interacting with host PHB and PHB2. Indeed, these two proteins play a role in maintaining the functional integrity of the mitochondria and protecting cells from various stresses. Responsible for the cleavages located at the N-terminus of the replicase polyprotein. In addition, PL-PRO possesses a deubiquitinating/deISGylating activity and processes both 'Lys-48'- and 'Lys-63'-linked polyubiquitin chains from cellular substrates. Participates together with nsp4 in the assembly of virally-induced cytoplasmic double-membrane vesicles necessary for viral replication. Antagonizes innate immune induction of type I interferon by blocking the phosphorylation, dimerization and subsequent nuclear translocation of host IRF3. Also prevents host NF-kappa-B signaling. In terms of biological role, participates in the assembly of virally-induced cytoplasmic double-membrane vesicles necessary for viral replication. Functionally, cleaves the C-terminus of replicase polyprotein at 11 sites. Recognizes substrates containing the core sequence [ILMVF]-Q-|-[SGACN]. Also able to bind an ADP-ribose-1''-phosphate (ADRP). Its function is as follows. Plays a role in the initial induction of autophagosomes from host endoplasmic reticulum. Later, limits the expansion of these phagosomes that are no longer able to deliver viral components to lysosomes. Forms a hexadecamer with nsp8 (8 subunits of each) that may participate in viral replication by acting as a primase. Alternatively, may synthesize substantially longer products than oligonucleotide primers. In terms of biological role, forms a hexadecamer with nsp7 (8 subunits of each) that may participate in viral replication by acting as a primase. Alternatively, may synthesize substantially longer products than oligonucleotide primers. Functionally, forms a primer, NSP9-pU, which is utilized by the polymerase for the initiation of RNA chains. Interacts with ribosome signal recognition particle RNA (SRP). Together with NSP8, suppress protein integration into the cell membrane, thereby disrupting host immune defenses. Its function is as follows. Plays a pivotal role in viral transcription by stimulating both nsp14 3'-5' exoribonuclease and nsp16 2'-O-methyltransferase activities. Therefore plays an essential role in viral mRNAs cap methylation. RNA-directed RNA polymerase that catalyzes the transcription of viral genomic and subgenomic RNAs. Acts in complex with nsp7 and nsp8 to transcribe both the minus and positive strands of genomic RNA. The kinase-like NiRAN domain of NSP12 attaches one or more nucleotides to the amino terminus of NSP9, forming a covalent RNA-protein intermediate that serves as transcription/replication primer. Subgenomic RNAs (sgRNAs) are formed by discontinuous transcription: The polymerase has the ability to pause at transcription-regulating sequences (TRS) and jump to the leader TRS, resulting in a major deletion. This creates a series of subgenomic RNAs that are replicated, transcribed and translated. In addition, Nsp12 is a subunit of the viral RNA capping enzyme that catalyzes the RNA guanylyltransferase reaction for genomic and sub-genomic RNAs. Subsequently, the NiRAN domain transfers RNA to GDP, and forms the core cap structure GpppA-RNA. In terms of biological role, multi-functional protein with a zinc-binding domain in N-terminus displaying RNA and DNA duplex-unwinding activities with 5' to 3' polarity. Activity of helicase is dependent on magnesium. Functionally, plays a role in viral RNA synthesis through two distinct activities. The N7-guanine methyltransferase activity plays a role in the formation of the cap structure GpppA-RNA. The proofreading exoribonuclease reduces the sensitivity of the virus to RNA mutagens during replication. This activity acts on both ssRNA and dsRNA in a 3'-5' direction. Its function is as follows. Plays a role in viral transcription/replication and prevents the simultaneous activation of host cell dsRNA sensors, such as MDA5/IFIH1, OAS, and PKR. Acts by degrading the 5'-polyuridines generated during replication of the poly(A) region of viral genomic and subgenomic RNAs. Catalyzes a two-step reaction in which a 2'3'-cyclic phosphate (2'3'-cP) is first generated by 2'-O transesterification, which is then hydrolyzed to a 3'-phosphate (3'-P). If not degraded, poly(U) RNA would hybridize with poly(A) RNA tails and activate host dsRNA sensors. Methyltransferase that mediates mRNA cap 2'-O-ribose methylation to the 5'-cap structure of viral mRNAs. N7-methyl guanosine cap is a prerequisite for binding of nsp16. Therefore plays an essential role in viral mRNAs cap methylation which is essential to evade immune system. The protein is Replicase polyprotein 1ab (rep) of Bos taurus (Bovine).